The primary structure comprises 190 residues: Early nodulin-like protein 12 (190 aa).

The signal sequence occupies residues 1–21; that stretch reads MGIIVPVLTLVFLLFAKVSHG. Positions 26 to 130 constitute a Phytocyanin domain; it reads RVILVGGSVG…GEKITLVVLA (105 aa). Residue N44 is glycosylated (N-linked (GlcNAc...) asparagine). A disulfide bridge connects residues C84 and C118. Residues 135 to 164 are disordered; the sequence is GGGSSSGDAPKVSPVSPTAQTPAPAPGPAA. The segment covering 151-164 has biased composition (low complexity); the sequence is PTAQTPAPAPGPAA. A lipid anchor (GPI-anchor amidated asparagine) is attached at N167. Residues 168–190 constitute a propeptide, removed in mature form; the sequence is AAVGLKVASGWFLTAVVVGLAMA.

Belongs to the early nodulin-like (ENODL) family. In terms of tissue distribution, confined to flowers and siliques. Expressed in female gametophytes.

The protein resides in the cell membrane. Functionally, may act as a carbohydrate transporter. Required, together with ENODL11, ENODL12, ENODL13, ENODL14 and ENODL15, for male-female communication and pollen tube reception and burst at the synergid cell surface of the female gametophyte. This chain is Early nodulin-like protein 12, found in Arabidopsis thaliana (Mouse-ear cress).